The following is a 632-amino-acid chain: Polyadenylate-binding protein, cytoplasmic and nuclear (632 aa).

Residues 1–11 (MSAADANQLQE) are compositionally biased toward polar residues. Residues 1–43 (MSAADANQLQESLEKLNLDSAPAAAEEEAVAAESAPAGEEGAD) form a disordered region. Positions 31–43 (AAESAPAGEEGAD) are enriched in low complexity. RRM domains are found at residues 52-130 (ASLY…WSQR), 140-217 (GNIF…KHIS), 233-310 (TNIY…RAQK), and 336-413 (VNLF…LAQR). The 82-residue stretch at 534–615 (QQRDLAAIIA…ALTAFEEYKN (82 aa)) folds into the PABC domain.

This sequence belongs to the polyadenylate-binding protein type-1 family.

The protein localises to the cytoplasm. The protein resides in the nucleus. In terms of biological role, binds the poly(A) tail of mRNA. Appears to be an important mediator of the multiple roles of the poly(A) tail in mRNA biogenesis, stability and translation. In the nucleus, involved in both mRNA cleavage and polyadenylation. Is also required for efficient mRNA export to the cytoplasm. Acts in concert with a poly(A)-specific nuclease (PAN) to affect poly(A) tail shortening, which may occur concomitantly with either nucleocytoplasmic mRNA transport or translational initiation. In the cytoplasm, stimulates translation initiation and regulates mRNA decay through translation termination-coupled poly(A) shortening, probably mediated by PAN. In Scheffersomyces stipitis (strain ATCC 58785 / CBS 6054 / NBRC 10063 / NRRL Y-11545) (Yeast), this protein is Polyadenylate-binding protein, cytoplasmic and nuclear (PAB1).